The sequence spans 123 residues: Large ribosomal subunit protein eL8 (123 aa).

This sequence belongs to the eukaryotic ribosomal protein eL8 family. As to quaternary structure, part of the 50S ribosomal subunit. Probably part of the RNase P complex.

It is found in the cytoplasm. Its function is as follows. Multifunctional RNA-binding protein that recognizes the K-turn motif in ribosomal RNA, the RNA component of RNase P, box H/ACA, box C/D and box C'/D' sRNAs. This Thermococcus kodakarensis (strain ATCC BAA-918 / JCM 12380 / KOD1) (Pyrococcus kodakaraensis (strain KOD1)) protein is Large ribosomal subunit protein eL8.